A 557-amino-acid polypeptide reads, in one-letter code: CTP synthase (557 aa).

The interval 1-267 (MAKYIFVTGG…GAYLTQRLGL (267 aa)) is amidoligase domain. Serine 13 lines the CTP pocket. Position 13 (serine 13) interacts with UTP. 14-19 (SVGKGI) contributes to the ATP binding site. Position 54 (tyrosine 54) interacts with L-glutamine. Residue aspartate 71 participates in ATP binding. Mg(2+) contacts are provided by aspartate 71 and glutamate 141. CTP-binding positions include 148–150 (DIE), 188–193 (KTKPTQ), and lysine 224. Residues 188–193 (KTKPTQ) and lysine 224 contribute to the UTP site. A Glutamine amidotransferase type-1 domain is found at 292-535 (AIALVGKYVE…VAAAAKTFRE (244 aa)). Glycine 354 is an L-glutamine binding site. Residue cysteine 381 is the Nucleophile; for glutamine hydrolysis of the active site. L-glutamine is bound by residues 382–385 (LGMQ), glutamate 406, and arginine 463. Residues histidine 508 and glutamate 510 contribute to the active site. A disordered region spans residues 536 to 557 (GDQRPLPLEQNGAVTEHEPHSR).

This sequence belongs to the CTP synthase family. As to quaternary structure, homotetramer.

It catalyses the reaction UTP + L-glutamine + ATP + H2O = CTP + L-glutamate + ADP + phosphate + 2 H(+). The catalysed reaction is L-glutamine + H2O = L-glutamate + NH4(+). The enzyme catalyses UTP + NH4(+) + ATP = CTP + ADP + phosphate + 2 H(+). It participates in pyrimidine metabolism; CTP biosynthesis via de novo pathway; CTP from UDP: step 2/2. With respect to regulation, allosterically activated by GTP, when glutamine is the substrate; GTP has no effect on the reaction when ammonia is the substrate. The allosteric effector GTP functions by stabilizing the protein conformation that binds the tetrahedral intermediate(s) formed during glutamine hydrolysis. Inhibited by the product CTP, via allosteric rather than competitive inhibition. Functionally, catalyzes the ATP-dependent amination of UTP to CTP with either L-glutamine or ammonia as the source of nitrogen. Regulates intracellular CTP levels through interactions with the four ribonucleotide triphosphates. In Roseiflexus sp. (strain RS-1), this protein is CTP synthase.